The following is a 545-amino-acid chain: Alpha-galactosidase A (545 aa).

The N-terminal stretch at 1–31 (MIQGLESIMNQGTKRILLAATLAATPWQVYG) is a signal peptide. Cys54 and Cys86 form a disulfide bridge. Asn57, Asn95, Asn101, and Asn131 each carry an N-linked (GlcNAc...) asparagine glycan. Cysteines 134 and 164 form a disulfide. Asp162 functions as the Nucleophile in the catalytic mechanism. The N-linked (GlcNAc...) asparagine glycan is linked to Asn211. The active-site Proton donor is Asp220. N-linked (GlcNAc...) asparagine glycosylation is found at Asn363 and Asn444. The 98-residue stretch at 421–518 (CSSVVPTGLV…KNAKTDGCLT (98 aa)) folds into the Ricin B-type lectin domain. Disulfide bonds link Cys438-Cys452 and Cys477-Cys490.

Belongs to the glycosyl hydrolase 27 family. A C-terminal Ser/Thr-rich region may provide possible sites for O-glycosylation.

It localises to the secreted. It carries out the reaction Hydrolysis of terminal, non-reducing alpha-D-galactose residues in alpha-D-galactosides, including galactose oligosaccharides, galactomannans and galactolipids.. Hydrolyzes a variety of simple alpha-D-galactoside as well as more complex molecules such as oligosaccharides and polysaccharides. The polypeptide is Alpha-galactosidase A (aglA) (Aspergillus niger).